Here is a 190-residue protein sequence, read N- to C-terminus: PBP1-interacting protein LSM12 (190 aa).

A Sm domain is found at 2–69; sequence PVCNNDSQLI…IKEVTALRDN (68 aa). The 107-residue stretch at 84–190 folds into the AD domain; the sequence is PSMQAARDRS…ERVQKTLSKK (107 aa).

Belongs to the LSM12 family. In terms of assembly, forms a complex composed of at least MKT1, PBP1, XAC1 and LSM12. Forms a complex composed of at least MKT1L, PBP1, XAC1 and LSM12. Within the complex, interacts with PBP1; the interaction is direct.

In terms of biological role, involved in post-transcriptional regulation of gene expression. The protein is PBP1-interacting protein LSM12 of Trypanosoma brucei brucei (strain 927/4 GUTat10.1).